The following is a 185-amino-acid chain: Elongation factor P (185 aa).

It belongs to the elongation factor P family.

The protein localises to the cytoplasm. The protein operates within protein biosynthesis; polypeptide chain elongation. Involved in peptide bond synthesis. Stimulates efficient translation and peptide-bond synthesis on native or reconstituted 70S ribosomes in vitro. Probably functions indirectly by altering the affinity of the ribosome for aminoacyl-tRNA, thus increasing their reactivity as acceptors for peptidyl transferase. This is Elongation factor P from Herpetosiphon aurantiacus (strain ATCC 23779 / DSM 785 / 114-95).